Here is a 392-residue protein sequence, read N- to C-terminus: 5-amino-6-(D-ribitylamino)uracil--L-tyrosine 4-hydroxyphenyl transferase (392 aa).

The region spanning 60-307 (VTYVVNRNIN…MAIARLYLGK (248 aa)) is the Radical SAM core domain. Residues Cys74, Cys78, and Cys81 each coordinate [4Fe-4S] cluster.

It belongs to the radical SAM superfamily. CofH family. As to quaternary structure, consists of two subunits, CofG and CofH. [4Fe-4S] cluster serves as cofactor.

The catalysed reaction is 5-amino-6-(D-ribitylamino)uracil + L-tyrosine + S-adenosyl-L-methionine = 5-amino-5-(4-hydroxybenzyl)-6-(D-ribitylimino)-5,6-dihydrouracil + 2-iminoacetate + 5'-deoxyadenosine + L-methionine + H(+). The protein operates within cofactor biosynthesis; coenzyme F0 biosynthesis. Its function is as follows. Catalyzes the radical-mediated synthesis of 5-amino-5-(4-hydroxybenzyl)-6-(D-ribitylimino)-5,6-dihydrouracil from 5-amino-6-(D-ribitylamino)uracil and L-tyrosine. In Synechocystis sp. (strain ATCC 27184 / PCC 6803 / Kazusa), this protein is 5-amino-6-(D-ribitylamino)uracil--L-tyrosine 4-hydroxyphenyl transferase.